Consider the following 217-residue polypeptide: Phosphatidylserine decarboxylase proenzyme (217 aa).

S183 acts as the Schiff-base intermediate with substrate; via pyruvic acid in catalysis. Residue S183 is modified to Pyruvic acid (Ser); by autocatalysis.

It belongs to the phosphatidylserine decarboxylase family. PSD-A subfamily. Heterodimer of a large membrane-associated beta subunit and a small pyruvoyl-containing alpha subunit. Requires pyruvate as cofactor. Post-translationally, is synthesized initially as an inactive proenzyme. Formation of the active enzyme involves a self-maturation process in which the active site pyruvoyl group is generated from an internal serine residue via an autocatalytic post-translational modification. Two non-identical subunits are generated from the proenzyme in this reaction, and the pyruvate is formed at the N-terminus of the alpha chain, which is derived from the carboxyl end of the proenzyme. The post-translation cleavage follows an unusual pathway, termed non-hydrolytic serinolysis, in which the side chain hydroxyl group of the serine supplies its oxygen atom to form the C-terminus of the beta chain, while the remainder of the serine residue undergoes an oxidative deamination to produce ammonia and the pyruvoyl prosthetic group on the alpha chain.

It is found in the cell membrane. The catalysed reaction is a 1,2-diacyl-sn-glycero-3-phospho-L-serine + H(+) = a 1,2-diacyl-sn-glycero-3-phosphoethanolamine + CO2. It participates in phospholipid metabolism; phosphatidylethanolamine biosynthesis; phosphatidylethanolamine from CDP-diacylglycerol: step 2/2. Functionally, catalyzes the formation of phosphatidylethanolamine (PtdEtn) from phosphatidylserine (PtdSer). This is Phosphatidylserine decarboxylase proenzyme from Cupriavidus metallidurans (strain ATCC 43123 / DSM 2839 / NBRC 102507 / CH34) (Ralstonia metallidurans).